The chain runs to 298 residues: NADH-cytochrome b5 reductase 1 (298 aa).

A helical membrane pass occupies residues 14–34 (VILAGAYLIDPSALPFVAAGV). The 104-residue stretch at 56–159 (KEYRKFKLVD…RGPKGQFSYT (104 aa)) folds into the FAD-binding FR-type domain. FAD contacts are provided by residues 139-154 (SELSIGDSINARGPKG) and 165-197 (AIGMIAGGTGLTPMLQIIRAIVKNPEDKTQVNF).

This sequence belongs to the flavoprotein pyridine nucleotide cytochrome reductase family. In terms of assembly, monomer. Component of the 2-(3-amino-3-carboxypropyl)histidine synthase complex composed of DPH1, DPH2, DPH3 and a NADH-dependent reductase, predominantly CBR1. FAD is required as a cofactor.

The protein resides in the mitochondrion outer membrane. It catalyses the reaction 2 Fe(III)-[cytochrome b5] + NADH = 2 Fe(II)-[cytochrome b5] + NAD(+) + H(+). The enzyme catalyses 2 Fe(3+)-[Dph3] + NADH = 2 Fe(2+)-[Dph3] + NAD(+) + H(+). It functions in the pathway protein modification; peptidyl-diphthamide biosynthesis. Its function is as follows. NADH-dependent reductase for DPH3 and cytochrome b5. Required for the first step of diphthamide biosynthesis, a post-translational modification of histidine which occurs in elongation factor 2. DPH1 and DPH2 transfer a 3-amino-3-carboxypropyl (ACP) group from S-adenosyl-L-methionine (SAM) to a histidine residue, the reaction is assisted by a reduction system comprising DPH3 and a NADH-dependent reductase, predominantly CBR1. By reducing DPH3, also involved in the formation of the tRNA wobble base modification mcm5s 2U (5-methoxycarbonylmethyl-2-thiouridine), mediated by the elongator complex. The cytochrome b5/NADH cytochrome b5 reductase electron transfer system supports the catalytic activity of several sterol biosynthetic enzymes. The sequence is that of NADH-cytochrome b5 reductase 1 (CBR1) from Mortierella alpina (Oleaginous fungus).